Reading from the N-terminus, the 698-residue chain is tRNA (guanine(37)-N(1))-methyltransferase (698 aa).

A disordered region spans residues 207–242; that stretch reads SPPSVSLTENQDGDPQAQDSLRAVAAPPSPSSRKRG. Residues H427, 465 to 466, 494 to 495, and N536 contribute to the S-adenosyl-L-methionine site; these read DL and DG.

Belongs to the class I-like SAM-binding methyltransferase superfamily. TRM5/TYW2 family. Monomer.

The protein localises to the mitochondrion matrix. The protein resides in the nucleus. It localises to the cytoplasm. It carries out the reaction guanosine(37) in tRNA + S-adenosyl-L-methionine = N(1)-methylguanosine(37) in tRNA + S-adenosyl-L-homocysteine + H(+). In terms of biological role, specifically methylates the N1 position of guanosine-37 in various cytoplasmic and mitochondrial tRNAs. Methylation is not dependent on the nature of the nucleoside 5' of the target nucleoside. This is the first step in the biosynthesis of wybutosine (yW), a modified base adjacent to the anticodon of tRNAs and required for accurate decoding. This chain is tRNA (guanine(37)-N(1))-methyltransferase, found in Leishmania braziliensis.